We begin with the raw amino-acid sequence, 112 residues long: UPF0251 protein MA_4245 (112 aa).

This sequence belongs to the UPF0251 family.

The polypeptide is UPF0251 protein MA_4245 (Methanosarcina acetivorans (strain ATCC 35395 / DSM 2834 / JCM 12185 / C2A)).